Reading from the N-terminus, the 135-residue chain is Large ribosomal subunit protein eL27z (135 aa).

Belongs to the eukaryotic ribosomal protein eL27 family.

This Arabidopsis thaliana (Mouse-ear cress) protein is Large ribosomal subunit protein eL27z (RPL27A).